The following is a 135-amino-acid chain: Large ribosomal subunit protein uL16c (135 aa).

It belongs to the universal ribosomal protein uL16 family. Part of the 50S ribosomal subunit.

It is found in the plastid. Its subcellular location is the chloroplast. This Aethionema cordifolium (Lebanon stonecress) protein is Large ribosomal subunit protein uL16c.